Reading from the N-terminus, the 209-residue chain is Large ribosomal subunit protein uL3 (209 aa).

Residues 128–163 are disordered; the sequence is FGGGSRTHGQSDRLRAPGSVGGSSDPSRTFRGTRMA.

It belongs to the universal ribosomal protein uL3 family. As to quaternary structure, part of the 50S ribosomal subunit. Forms a cluster with proteins L14 and L19.

Functionally, one of the primary rRNA binding proteins, it binds directly near the 3'-end of the 23S rRNA, where it nucleates assembly of the 50S subunit. This Chlorobium phaeobacteroides (strain DSM 266 / SMG 266 / 2430) protein is Large ribosomal subunit protein uL3.